A 341-amino-acid chain; its full sequence is Glyceraldehyde-3-phosphate dehydrogenase 2 (341 aa).

NAD(+)-binding positions include Arg13–Ile14, Asp35, and Arg85. Residues Ser157–Thr159, Thr188, Thr217–Gly218, and Arg240 each bind D-glyceraldehyde 3-phosphate. Cys158 acts as the Nucleophile in catalysis. Asn322 serves as a coordination point for NAD(+).

Belongs to the glyceraldehyde-3-phosphate dehydrogenase family. In terms of assembly, homotetramer.

The protein resides in the cytoplasm. It catalyses the reaction D-glyceraldehyde 3-phosphate + phosphate + NAD(+) = (2R)-3-phospho-glyceroyl phosphate + NADH + H(+). It participates in carbohydrate degradation; glycolysis; pyruvate from D-glyceraldehyde 3-phosphate: step 1/5. In Caenorhabditis elegans, this protein is Glyceraldehyde-3-phosphate dehydrogenase 2 (gpd-2).